The sequence spans 206 residues: Protein tyrosine phosphatase receptor type C-associated protein (206 aa).

Residues 34–54 (VTVVLLLLLLLLLATGLALAW) traverse the membrane as a helical segment. Residues 98–173 (GSTDNDLERQ…PGPASAGGSA (76 aa)) are disordered. 2 positions are modified to phosphoserine: serine 99 and serine 153. Over residues 161-173 (LGSPGPASAGGSA) the composition is skewed to low complexity.

Interacts with CD45/PTPRC. In terms of processing, phosphorylated on tyrosine residues.

It is found in the membrane. The protein is Protein tyrosine phosphatase receptor type C-associated protein (PTPRCAP) of Homo sapiens (Human).